Reading from the N-terminus, the 471-residue chain is ATP synthase subunit beta (471 aa).

Residue 153 to 160 participates in ATP binding; it reads GGAGVGKT.

The protein belongs to the ATPase alpha/beta chains family. As to quaternary structure, F-type ATPases have 2 components, CF(1) - the catalytic core - and CF(0) - the membrane proton channel. CF(1) has five subunits: alpha(3), beta(3), gamma(1), delta(1), epsilon(1). CF(0) has four main subunits: a(1), b(1), b'(1) and c(9-12).

Its subcellular location is the cell membrane. The enzyme catalyses ATP + H2O + 4 H(+)(in) = ADP + phosphate + 5 H(+)(out). Produces ATP from ADP in the presence of a proton gradient across the membrane. The catalytic sites are hosted primarily by the beta subunits. The sequence is that of ATP synthase subunit beta from Roseiflexus sp. (strain RS-1).